We begin with the raw amino-acid sequence, 821 residues long: Putative outer membrane usher protein YqiG (821 aa).

A signal peptide spans 1 to 20 (MSGNIGANPVIIIGCASAYA). A disulfide bond links cysteine 798 and cysteine 817.

Belongs to the fimbrial export usher family.

Its subcellular location is the cell outer membrane. Functionally, may be involved in H(2) production during fermentative growth. Involved in the export and assembly of a fimbrial subunit across the outer membrane. The polypeptide is Putative outer membrane usher protein YqiG (yqiG) (Escherichia coli (strain K12)).